We begin with the raw amino-acid sequence, 683 residues long: MKTEVNGSAPALAGDHGGVDQDTPDAGDRTEQAKHKTNGATENAPKSANAKDPSRPRRKKARRACFACQRAHLTCGDERPCQRCIKRGLQDACHDGVRKKAKYLHDAPDGALMPGVGGNFYNNAMRNNMPLSRNGTTTVNTTTQQNSGSNYYPTPQSNSYNVYQDTPLTQNSFPSQSPVSPTFNMKTTPTARSNSLSSSVNQQPPSTTVSGATQSQNPFAGPFFDPSDPALFNFDLSSMNFENRYGALEFGMLGHMATGAGDSPTDSATQRGSIGRSGSTQYSTTPLTGAPGFGESPGNQQPFLFGNDPLLNEWPNSQAPNQGHLNVSGVYPQGGMMHMAKSDAPHAFAIESGPASFSSPSATTSPHINSGHDESSLSNAAVNKSTGLTANGQRPAITTPSLKHQSLQFGVKRRQRNPSTVYESVKEPYAYTNRFHNLTAFIQRRFSPQKTLQIAKALASIRPSFIATTKTLNRDDLIFMEKCFQRTLWEYEDFINACGTPTIVCRRTGEIAAVGKEFSILTGWKKDVLLGKEPNLNVNTGGSSAPGSGNTSRGSFTPRSSTLETATPGRPQPVFLAELLDDDSVVEFYEDFARLAFGDSRGSVMTTCKLLKYKTKEDMELAQSDDNQRWNNHLRKGGIAGEAGMNQLGFKDGKVECAYCWTVKRDVFDIPMLIVMNVFLPCI.

Positions 1-58 (MKTEVNGSAPALAGDHGGVDQDTPDAGDRTEQAKHKTNGATENAPKSANAKDPSRPRR) are disordered. Residues 65–93 (CFACQRAHLTCGDERPCQRCIKRGLQDAC) constitute a DNA-binding region (zn(2)-C6 fungal-type). Disordered regions lie at residues 131–224 (LSRN…GPFF), 261–328 (GDSP…LNVS), 351–418 (ESGP…QRNP), and 537–569 (NVNT…ATPG). Positions 134–150 (NGTTTVNTTTQQNSGSN) are enriched in low complexity. Composition is skewed to polar residues over residues 151 to 218 (YYPT…SQNP), 264 to 287 (PTDS…TTPL), and 314 to 325 (WPNSQAPNQGHL). Residues 352-366 (SGPASFSSPSATTSP) show a composition bias toward low complexity. Polar residues-rich tracts occupy residues 376–408 (SLSN…QSLQ) and 537–565 (NVNT…TLET).

This sequence belongs to the ERT1/acuK family.

It localises to the nucleus. Functionally, transcription factor which regulates nonfermentable carbon utilization. Activator of gluconeogenetic genes. In Aspergillus fumigatus (strain CBS 144.89 / FGSC A1163 / CEA10) (Neosartorya fumigata), this protein is Transcription activator of gluconeogenesis acuK (acuK).